Consider the following 157-residue polypeptide: Transcription elongation factor GreA (157 aa).

The protein belongs to the GreA/GreB family.

Functionally, necessary for efficient RNA polymerase transcription elongation past template-encoded arresting sites. The arresting sites in DNA have the property of trapping a certain fraction of elongating RNA polymerases that pass through, resulting in locked ternary complexes. Cleavage of the nascent transcript by cleavage factors such as GreA or GreB allows the resumption of elongation from the new 3'terminus. GreA releases sequences of 2 to 3 nucleotides. This is Transcription elongation factor GreA from Brucella abortus (strain S19).